Here is a 240-residue protein sequence, read N- to C-terminus: Peptidyl-tRNA hydrolase (240 aa).

Position 14 (Tyr-14) interacts with tRNA. His-19 functions as the Proton acceptor in the catalytic mechanism. 3 residues coordinate tRNA: Phe-64, Asn-66, and Asn-112. The disordered stretch occupies residues 196–227 (EKPAQKQQPKQQSHIRQARSQQAPAKLPETGP). A compositionally biased stretch (polar residues) spans 209–218 (HIRQARSQQA).

Belongs to the PTH family. In terms of assembly, monomer.

Its subcellular location is the cytoplasm. The enzyme catalyses an N-acyl-L-alpha-aminoacyl-tRNA + H2O = an N-acyl-L-amino acid + a tRNA + H(+). Hydrolyzes ribosome-free peptidyl-tRNAs (with 1 or more amino acids incorporated), which drop off the ribosome during protein synthesis, or as a result of ribosome stalling. In terms of biological role, catalyzes the release of premature peptidyl moieties from peptidyl-tRNA molecules trapped in stalled 50S ribosomal subunits, and thus maintains levels of free tRNAs and 50S ribosomes. The polypeptide is Peptidyl-tRNA hydrolase (Mesorhizobium japonicum (strain LMG 29417 / CECT 9101 / MAFF 303099) (Mesorhizobium loti (strain MAFF 303099))).